A 765-amino-acid polypeptide reads, in one-letter code: Ubiquitin-like modifier-activating enzyme atg7 (765 aa).

The short motif at 436–441 (GAGTLG) is the GXGXXG motif element. Cys-616 (glycyl thioester intermediate) is an active-site residue. 2 disordered regions span residues 646-670 (AAPA…PPNH) and 744-765 (AAND…PELL). The interval 721 to 760 (ALTEKDYITELSGLAEVQRKAEAAANDVEWDSDEEGMEDE) is homodimerization. Acidic residues predominate over residues 748-765 (VEWDSDEEGMEDEEPELL).

It belongs to the ATG7 family. In terms of assembly, homodimer. Interacts with ATG8 through a thioester bond between Cys-616 and the C-terminal Gly of ATG8 and with ATG12 through a thioester bond between Cys-616 and the C-terminal Gly of ATG12. Also interacts with ATG3.

Its subcellular location is the cytoplasm. The protein localises to the preautophagosomal structure. Functionally, E1-like activating enzyme involved in the 2 ubiquitin-like systems required for cytoplasm to vacuole transport (Cvt) and autophagy. Activates ATG12 for its conjugation with ATG5 and ATG8 for its conjugation with phosphatidylethanolamine. Both systems are needed for the ATG8 association to Cvt vesicles and autophagosomes membranes. Autophagy is essential for maintenance of amino acid levels and protein synthesis under nitrogen starvation. Required for selective autophagic degradation of the nucleus (nucleophagy) as well as for mitophagy which contributes to regulate mitochondrial quantity and quality by eliminating the mitochondria to a basal level to fulfill cellular energy requirements and preventing excess ROS production. Required for normal mycelial growth and conidiogenesis, and regulates sclerotial formation. Plays an essential role in pathogenesis. This Botryotinia fuckeliana (strain BcDW1) (Noble rot fungus) protein is Ubiquitin-like modifier-activating enzyme atg7.